The primary structure comprises 32 residues: Peptide tarsal-less AA (32 aa).

The tract at residues Met-1 to Tyr-32 is disordered. The stretch at Leu-2 to Tyr-8 is repeat 1. Residues Leu-2–Tyr-32 form a 2 X 7 AA repeats of L-D-P-T-G-[TQ]-Y region. Over residues Arg-10–Cys-25 the composition is skewed to basic and acidic residues. Repeat unit 2 spans residues Leu-26–Tyr-32.

The protein localises to the cytoplasm. Its subcellular location is the nucleus. Its function is as follows. One of four peptides (tal-1A, tal-2A, tal-3A and tal-AA) produced from a polycistronic gene that function redundantly in several developmental processes. Required in early stages of leg development for the intercalation of the tarsal segments during the mid-third instar stage and later for tarsal joint formation. Promotes the post-translational modification of ovo isoform B (svb) into its active form which in turn initiates trichome development and promotes tarsal joint development. This is likely due to recruitment of the E3 ubiquitin-protein ligase Ubr3 to svb for ubiquitination of its N-terminus, converting svb into a transcriptional activator. Also enhances interaction of Ubr3 with Diap1. Required for correct wing and leg formation through its regulation of several genes including those in the Notch signaling pathway. Essential for denticle formation and may have a role in the developmental timing of trichome differentiation. Essential for the development of taenidial folds in the trachea. This Drosophila melanogaster (Fruit fly) protein is Peptide tarsal-less AA.